Consider the following 393-residue polypeptide: S-adenosylmethionine synthase (393 aa).

His16 contributes to the ATP binding site. Asp18 is a binding site for Mg(2+). Glu44 contributes to the K(+) binding site. The L-methionine site is built by Glu57 and Gln100. The flexible loop stretch occupies residues 100–110 (QSNDIAQGVDH). ATP is bound by residues 167-169 (DAK), 238-239 (RF), Asp247, 253-254 (RK), Ala270, and Lys274. Asp247 serves as a coordination point for L-methionine. An L-methionine-binding site is contributed by Lys278.

The protein belongs to the AdoMet synthase family. In terms of assembly, homotetramer; dimer of dimers. Mg(2+) serves as cofactor. The cofactor is K(+).

The protein resides in the cytoplasm. It carries out the reaction L-methionine + ATP + H2O = S-adenosyl-L-methionine + phosphate + diphosphate. It functions in the pathway amino-acid biosynthesis; S-adenosyl-L-methionine biosynthesis; S-adenosyl-L-methionine from L-methionine: step 1/1. Its function is as follows. Catalyzes the formation of S-adenosylmethionine (AdoMet) from methionine and ATP. The overall synthetic reaction is composed of two sequential steps, AdoMet formation and the subsequent tripolyphosphate hydrolysis which occurs prior to release of AdoMet from the enzyme. The protein is S-adenosylmethionine synthase of Acidovorax ebreus (strain TPSY) (Diaphorobacter sp. (strain TPSY)).